A 128-amino-acid polypeptide reads, in one-letter code: MHQYELMVILDPEIDERTVAPSLDKFLNVVRNDGGTIDNVDIWGRRRLAYEINKKSEGIYAVVQLTATGDTTKELDRQLKLSEAVMRTKVLRADEAIAQVAAAQKRADEKAARKAAAAEKTVTEKVGV.

This sequence belongs to the bacterial ribosomal protein bS6 family.

In terms of biological role, binds together with bS18 to 16S ribosomal RNA. This Leifsonia xyli subsp. xyli (strain CTCB07) protein is Small ribosomal subunit protein bS6.